The primary structure comprises 451 residues: tRNA modification GTPase MnmE (451 aa).

Residues Arg-25, Glu-87, and Arg-127 each coordinate (6S)-5-formyl-5,6,7,8-tetrahydrofolate. The 153-residue stretch at 222–374 (GLRVALVGRP…FVQVLLERCG (153 aa)) folds into the TrmE-type G domain. Position 232 (Asn-232) interacts with K(+). Residues 232–237 (NVGKSS), 251–257 (TELPGTT), and 276–279 (DTAG) contribute to the GTP site. Ser-236 is a Mg(2+) binding site. Residues Thr-251, Leu-253, and Thr-256 each contribute to the K(+) site. Thr-257 lines the Mg(2+) pocket. Residue Lys-451 participates in (6S)-5-formyl-5,6,7,8-tetrahydrofolate binding.

The protein belongs to the TRAFAC class TrmE-Era-EngA-EngB-Septin-like GTPase superfamily. TrmE GTPase family. As to quaternary structure, homodimer. Heterotetramer of two MnmE and two MnmG subunits. K(+) is required as a cofactor.

Its subcellular location is the cytoplasm. Functionally, exhibits a very high intrinsic GTPase hydrolysis rate. Involved in the addition of a carboxymethylaminomethyl (cmnm) group at the wobble position (U34) of certain tRNAs, forming tRNA-cmnm(5)s(2)U34. The polypeptide is tRNA modification GTPase MnmE (Synechococcus sp. (strain CC9902)).